Consider the following 423-residue polypeptide: Histidine--tRNA ligase (423 aa).

This sequence belongs to the class-II aminoacyl-tRNA synthetase family. As to quaternary structure, homodimer.

It localises to the cytoplasm. The enzyme catalyses tRNA(His) + L-histidine + ATP = L-histidyl-tRNA(His) + AMP + diphosphate + H(+). The chain is Histidine--tRNA ligase (hisS) from Pasteurella multocida (strain Pm70).